The primary structure comprises 391 residues: Ferrochelatase (391 aa).

Fe cation-binding residues include histidine 196 and glutamate 281.

Belongs to the ferrochelatase family.

It localises to the cytoplasm. It catalyses the reaction heme b + 2 H(+) = protoporphyrin IX + Fe(2+). It functions in the pathway porphyrin-containing compound metabolism; protoheme biosynthesis; protoheme from protoporphyrin-IX: step 1/1. In terms of biological role, catalyzes the ferrous insertion into protoporphyrin IX. The chain is Ferrochelatase from Prochlorococcus marinus (strain NATL2A).